Here is a 266-residue protein sequence, read N- to C-terminus: MPIDTPYEDLLRLVTERGTPKSDRTGTGTRSLFGHQMRYDLSAGFPLITTKKVHTKSVIYELLWFLRGDSNVRWLQEHGVTIWDEWASETGDLGPIYGVQWRSWPTPSGEHIDQISSALELLKSDPDSRRNIVSAWNVGEIPQMALPPCHAFFQFYVADGKLSCQLYQRSADLFLGVPFNIASYALLTHMMAAQAGLDVGEFIWTGGDCHIYDNHTEQVALQLSREPRPYPELVLAPRDSIFDYTYEDIAIVNYDPHPAIKAPVAV.

Arg-24 provides a ligand contact to dUMP. His-54 serves as a coordination point for (6R)-5,10-methylene-5,6,7,8-tetrahydrofolate. 129 to 130 (RR) is a binding site for dUMP. The active-site Nucleophile is Cys-149. Residues 169-172 (RSAD), Asn-180, and 210-212 (HIY) contribute to the dUMP site. Asp-172 provides a ligand contact to (6R)-5,10-methylene-5,6,7,8-tetrahydrofolate. Residue Ala-265 participates in (6R)-5,10-methylene-5,6,7,8-tetrahydrofolate binding.

It belongs to the thymidylate synthase family. Bacterial-type ThyA subfamily. As to quaternary structure, homodimer.

The protein resides in the cytoplasm. It carries out the reaction dUMP + (6R)-5,10-methylene-5,6,7,8-tetrahydrofolate = 7,8-dihydrofolate + dTMP. It participates in pyrimidine metabolism; dTTP biosynthesis. Catalyzes the reductive methylation of 2'-deoxyuridine-5'-monophosphate (dUMP) to 2'-deoxythymidine-5'-monophosphate (dTMP) while utilizing 5,10-methylenetetrahydrofolate (mTHF) as the methyl donor and reductant in the reaction, yielding dihydrofolate (DHF) as a by-product. This enzymatic reaction provides an intracellular de novo source of dTMP, an essential precursor for DNA biosynthesis. The sequence is that of Thymidylate synthase from Mycolicibacterium smegmatis (strain ATCC 700084 / mc(2)155) (Mycobacterium smegmatis).